The primary structure comprises 445 residues: Trigger factor (445 aa).

In terms of domain architecture, PPIase FKBP-type spans 162 to 247 (GDQVTIDAIG…IKAVHTAEPT (86 aa)).

It belongs to the FKBP-type PPIase family. Tig subfamily.

The protein localises to the cytoplasm. The catalysed reaction is [protein]-peptidylproline (omega=180) = [protein]-peptidylproline (omega=0). Its function is as follows. Involved in protein export. Acts as a chaperone by maintaining the newly synthesized protein in an open conformation. Functions as a peptidyl-prolyl cis-trans isomerase. This Rickettsia prowazekii (strain Madrid E) protein is Trigger factor (tig).